Here is a 431-residue protein sequence, read N- to C-terminus: Na(+)-translocating NADH-quinone reductase subunit F (431 aa).

A helical membrane pass occupies residues 10–30; that stretch reads IFIASTAFCALGLLLVAIILL. The region spanning 41-133 is the 2Fe-2S ferredoxin-type domain; the sequence is CKLRINNDDS…DMNLEIEERY (93 aa). The [2Fe-2S] cluster site is built by cysteine 76, cysteine 82, cysteine 85, and cysteine 117. Residues 136–286 form the FAD-binding FR-type domain; the sequence is ASSWEGTVVS…SGPYGESFMK (151 aa). A catalytic region spans residues 289-413; it reads NRPVIFLIGG…ALHNSSILTL (125 aa).

Belongs to the NqrF family. In terms of assembly, composed of six subunits; NqrA, NqrB, NqrC, NqrD, NqrE and NqrF. The cofactor is [2Fe-2S] cluster. FAD serves as cofactor.

It is found in the cell inner membrane. It catalyses the reaction a ubiquinone + n Na(+)(in) + NADH + H(+) = a ubiquinol + n Na(+)(out) + NAD(+). NQR complex catalyzes the reduction of ubiquinone-1 to ubiquinol by two successive reactions, coupled with the transport of Na(+) ions from the cytoplasm to the periplasm. The first step is catalyzed by NqrF, which accepts electrons from NADH and reduces ubiquinone-1 to ubisemiquinone by a one-electron transfer pathway. In Chlamydia muridarum (strain MoPn / Nigg), this protein is Na(+)-translocating NADH-quinone reductase subunit F.